The sequence spans 347 residues: Holliday junction branch migration complex subunit RuvB (347 aa).

Positions 13 to 195 (NEDAVTSGEV…FGIVEHMQYY (183 aa)) are large ATPase domain (RuvB-L). Residues L34, R35, G76, K79, T80, T81, 142–144 (EDY), R185, Y195, and R232 each bind ATP. Residue T80 participates in Mg(2+) binding. Residues 196 to 266 (TIDELEKIVQ…TTEGALKQLQ (71 aa)) are small ATPAse domain (RuvB-S). The tract at residues 269 to 347 (DEGLDQTDRR…QLGLPVPGDK (79 aa)) is head domain (RuvB-H). R329 is a DNA binding site.

The protein belongs to the RuvB family. As to quaternary structure, homohexamer. Forms an RuvA(8)-RuvB(12)-Holliday junction (HJ) complex. HJ DNA is sandwiched between 2 RuvA tetramers; dsDNA enters through RuvA and exits via RuvB. An RuvB hexamer assembles on each DNA strand where it exits the tetramer. Each RuvB hexamer is contacted by two RuvA subunits (via domain III) on 2 adjacent RuvB subunits; this complex drives branch migration. In the full resolvosome a probable DNA-RuvA(4)-RuvB(12)-RuvC(2) complex forms which resolves the HJ.

The protein localises to the cytoplasm. The catalysed reaction is ATP + H2O = ADP + phosphate + H(+). Functionally, the RuvA-RuvB-RuvC complex processes Holliday junction (HJ) DNA during genetic recombination and DNA repair, while the RuvA-RuvB complex plays an important role in the rescue of blocked DNA replication forks via replication fork reversal (RFR). RuvA specifically binds to HJ cruciform DNA, conferring on it an open structure. The RuvB hexamer acts as an ATP-dependent pump, pulling dsDNA into and through the RuvAB complex. RuvB forms 2 homohexamers on either side of HJ DNA bound by 1 or 2 RuvA tetramers; 4 subunits per hexamer contact DNA at a time. Coordinated motions by a converter formed by DNA-disengaged RuvB subunits stimulates ATP hydrolysis and nucleotide exchange. Immobilization of the converter enables RuvB to convert the ATP-contained energy into a lever motion, pulling 2 nucleotides of DNA out of the RuvA tetramer per ATP hydrolyzed, thus driving DNA branch migration. The RuvB motors rotate together with the DNA substrate, which together with the progressing nucleotide cycle form the mechanistic basis for DNA recombination by continuous HJ branch migration. Branch migration allows RuvC to scan DNA until it finds its consensus sequence, where it cleaves and resolves cruciform DNA. This is Holliday junction branch migration complex subunit RuvB from Lactobacillus helveticus (strain DPC 4571).